We begin with the raw amino-acid sequence, 421 residues long: Na(+)/H(+) antiporter NhaA 1 (421 aa).

The next 11 membrane-spanning stretches (helical) occupy residues 48–68 (SSGL…NSPW), 93–113 (LYWW…GLEI), 129–149 (SLAL…YTLV), 157–177 (AGWG…LALL), 187–207 (VLLA…IALF), 215–235 (LALG…AAGV), 253–273 (LASG…IPLG), 299–319 (FLIL…GGSL), 326–346 (VVLG…WLAV), 364–384 (GLGL…GLAF), and 392–412 (AAKL…ITVL).

The protein belongs to the NhaA Na(+)/H(+) (TC 2.A.33) antiporter family.

The protein localises to the cell membrane. The catalysed reaction is Na(+)(in) + 2 H(+)(out) = Na(+)(out) + 2 H(+)(in). In terms of biological role, na(+)/H(+) antiporter that extrudes sodium in exchange for external protons. This chain is Na(+)/H(+) antiporter NhaA 1, found in Deinococcus geothermalis (strain DSM 11300 / CIP 105573 / AG-3a).